Reading from the N-terminus, the 415-residue chain is Gamma-glutamyl phosphate reductase (415 aa).

Belongs to the gamma-glutamyl phosphate reductase family.

The protein localises to the cytoplasm. It carries out the reaction L-glutamate 5-semialdehyde + phosphate + NADP(+) = L-glutamyl 5-phosphate + NADPH + H(+). It functions in the pathway amino-acid biosynthesis; L-proline biosynthesis; L-glutamate 5-semialdehyde from L-glutamate: step 2/2. Functionally, catalyzes the NADPH-dependent reduction of L-glutamate 5-phosphate into L-glutamate 5-semialdehyde and phosphate. The product spontaneously undergoes cyclization to form 1-pyrroline-5-carboxylate. The polypeptide is Gamma-glutamyl phosphate reductase (Xylella fastidiosa (strain 9a5c)).